A 134-amino-acid chain; its full sequence is Histone H2A (134 aa).

Positions Met-1–Ala-11 are enriched in gly residues. The segment at Met-1–Ala-24 is disordered. N6-acetyllysine occurs at positions 6 and 10. Gln-107 carries the N5-methylglutamine modification.

The protein belongs to the histone H2A family. As to quaternary structure, the nucleosome is a histone octamer containing two molecules each of H2A, H2B, H3 and H4 assembled in one H3-H4 heterotetramer and two H2A-H2B heterodimers. The octamer wraps approximately 147 bp of DNA. Post-translationally, acetylated by ESA1 to form H2AK4ac and H2AK7ac.

It is found in the nucleus. The protein resides in the chromosome. Its function is as follows. Core component of nucleosome. Nucleosomes wrap and compact DNA into chromatin, limiting DNA accessibility to the cellular machineries which require DNA as a template. Histones thereby play a central role in transcription regulation, DNA repair, DNA replication and chromosomal stability. DNA accessibility is regulated via a complex set of post-translational modifications of histones, also called histone code, and nucleosome remodeling. In Gibberella zeae (strain ATCC MYA-4620 / CBS 123657 / FGSC 9075 / NRRL 31084 / PH-1) (Wheat head blight fungus), this protein is Histone H2A (HTA1).